The primary structure comprises 739 residues: Glycine--tRNA ligase (739 aa).

Residues 1 to 36 (MPSPRPVLLRGARAALLLLLPPRLLARPSLLLRRSL) constitute a mitochondrion transit peptide. Residue Ser35 is modified to Phosphoserine. The 57-residue stretch at 63–119 (VLAPLRLAVRQQGDLVRKLKEDKAPQVDVDKAVAELKARKRVLEAKELALQPKDDIV) folds into the WHEP-TRS domain. The residue at position 204 (Lys204) is an N6-acetyllysine. Glu299 lines the glycine pocket. Residues 331–333 (RNE) and 342–343 (RV) each bind ATP. Glu350 lines the glycine pocket. Phosphotyrosine is present on Tyr453. 457 to 458 (EI) provides a ligand contact to ATP. The residue at position 501 (Lys501) is an N6-acetyllysine. Residue 576 to 578 (EPS) coordinates glycine. Arg583 serves as a coordination point for ATP. The residue at position 700 (Ser700) is a Phosphoserine. Thr736 is subject to Phosphothreonine.

Belongs to the class-II aminoacyl-tRNA synthetase family. As to quaternary structure, homodimer. As to expression, widely expressed, including in brain and spinal cord. Expressed in brain, spinal cord, muscle, heart and spleen. In terms of tissue distribution, expressed in brain, spinal cord, muscle, heart, spleen and liver.

The protein localises to the cytoplasm. It localises to the cell projection. The protein resides in the axon. Its subcellular location is the secreted. It is found in the extracellular exosome. The protein localises to the mitochondrion. It carries out the reaction tRNA(Gly) + glycine + ATP = glycyl-tRNA(Gly) + AMP + diphosphate. The enzyme catalyses 2 ATP + H(+) = P(1),P(4)-bis(5'-adenosyl) tetraphosphate + diphosphate. Ap4A synthesis is inhibited by tRNA, via the disruption of the second ATP-binding site by direct blocking and/or by tRNA-induced conformational change. Its function is as follows. Catalyzes the ATP-dependent ligation of glycine to the 3'-end of its cognate tRNA, via the formation of an aminoacyl-adenylate intermediate (Gly-AMP). Also produces diadenosine tetraphosphate (Ap4A), a universal pleiotropic signaling molecule needed for cell regulation pathways, by direct condensation of 2 ATPs. Thereby, may play a special role in Ap4A homeostasis. The sequence is that of Glycine--tRNA ligase from Homo sapiens (Human).